A 163-amino-acid chain; its full sequence is Protein-export protein SecB (163 aa).

The protein belongs to the SecB family. In terms of assembly, homotetramer, a dimer of dimers. One homotetramer interacts with 1 SecA dimer.

It is found in the cytoplasm. Functionally, one of the proteins required for the normal export of preproteins out of the cell cytoplasm. It is a molecular chaperone that binds to a subset of precursor proteins, maintaining them in a translocation-competent state. It also specifically binds to its receptor SecA. The polypeptide is Protein-export protein SecB (Azotobacter vinelandii (strain DJ / ATCC BAA-1303)).